We begin with the raw amino-acid sequence, 551 residues long: Electron transfer flavoprotein-ubiquinone oxidoreductase (551 aa).

10 to 24 (VVIVGAGPAGLSAAC) contributes to the FAD binding site. Residues Cys-496, Cys-520, Cys-523, and Cys-526 each contribute to the [4Fe-4S] cluster site. The 4Fe-4S ferredoxin-type domain maps to 511 to 540 (KRFQINAQNCVHCKTCDIKDPAQNITWVAP).

This sequence belongs to the ETF-QO/FixC family. [4Fe-4S] cluster is required as a cofactor. Requires FAD as cofactor.

The enzyme catalyses a ubiquinone + reduced [electron-transfer flavoprotein] = a ubiquinol + oxidized [electron-transfer flavoprotein] + H(+). Accepts electrons from ETF and reduces ubiquinone. The chain is Electron transfer flavoprotein-ubiquinone oxidoreductase from Pseudomonas aeruginosa (strain ATCC 15692 / DSM 22644 / CIP 104116 / JCM 14847 / LMG 12228 / 1C / PRS 101 / PAO1).